The primary structure comprises 373 residues: Dual-specificity RNA methyltransferase RlmN (373 aa).

Residue Glu104 is the Proton acceptor of the active site. The Radical SAM core domain occupies 110–349; the sequence is KNQRTTLCIS…VTIRKIRGYD (240 aa). Cys117 and Cys354 form a disulfide bridge. 3 residues coordinate [4Fe-4S] cluster: Cys124, Cys128, and Cys131. S-adenosyl-L-methionine-binding positions include 178 to 179, Ser210, 232 to 234, and Asn311; these read GE and SLH. The S-methylcysteine intermediate role is filled by Cys354.

Belongs to the radical SAM superfamily. RlmN family. [4Fe-4S] cluster is required as a cofactor.

Its subcellular location is the cytoplasm. It catalyses the reaction adenosine(2503) in 23S rRNA + 2 reduced [2Fe-2S]-[ferredoxin] + 2 S-adenosyl-L-methionine = 2-methyladenosine(2503) in 23S rRNA + 5'-deoxyadenosine + L-methionine + 2 oxidized [2Fe-2S]-[ferredoxin] + S-adenosyl-L-homocysteine. The catalysed reaction is adenosine(37) in tRNA + 2 reduced [2Fe-2S]-[ferredoxin] + 2 S-adenosyl-L-methionine = 2-methyladenosine(37) in tRNA + 5'-deoxyadenosine + L-methionine + 2 oxidized [2Fe-2S]-[ferredoxin] + S-adenosyl-L-homocysteine. Functionally, specifically methylates position 2 of adenine 2503 in 23S rRNA and position 2 of adenine 37 in tRNAs. m2A2503 modification seems to play a crucial role in the proofreading step occurring at the peptidyl transferase center and thus would serve to optimize ribosomal fidelity. The protein is Dual-specificity RNA methyltransferase RlmN of Buchnera aphidicola subsp. Baizongia pistaciae (strain Bp).